A 67-amino-acid polypeptide reads, in one-letter code: Alpha-like toxin Lqh3 (67 aa).

The region spanning 2 to 66 (RDGYIAQPEN…GIIVEGEKCH (65 aa)) is the LCN-type CS-alpha/beta domain. Intrachain disulfides connect C12–C65, C16–C37, C23–C47, and C27–C49. S67 is modified (serine amide).

This sequence belongs to the long (4 C-C) scorpion toxin superfamily. Sodium channel inhibitor family. Alpha subfamily. As to quaternary structure, monomer. Expressed by the venom gland.

It localises to the secreted. Alpha toxins bind voltage-independently at site-3 of sodium channels (Nav) and inhibit the inactivation of the activated channels, thereby blocking neuronal transmission. The dissociation is voltage-dependent. This alpha-like toxin is highly toxic to insects and competes with LqhaIT on binding to insect sodium channels. Differs from classical anti-mammalian alpha-toxins as it inhibits sodium channel inactivation in cell bodies of hippocampus brain neurons, on which the anti-mammalian Lqh2 is inactive, and is unable to affect Nav1.2 in the rat brain, on which Lqh2 is highly active. Moreover, its pharmacological properties are unique in that its binding affinity for insect channels drops &gt;30-fold at pH 8.5 versus pH 6.5, and its rate of association with receptor site-3 on both insect and mammalian sodium channels is 4-15-fold slower compared with LqhaIT and Lqh2. The polypeptide is Alpha-like toxin Lqh3 (Leiurus hebraeus (Hebrew deathstalker scorpion)).